Here is an 84-residue protein sequence, read N- to C-terminus: Small ribosomal subunit protein bS18A (84 aa).

It belongs to the bacterial ribosomal protein bS18 family. Part of the 30S ribosomal subunit. Forms a tight heterodimer with protein bS6.

Binds as a heterodimer with protein bS6 to the central domain of the 16S rRNA, where it helps stabilize the platform of the 30S subunit. The sequence is that of Small ribosomal subunit protein bS18A from Mycolicibacterium paratuberculosis (strain ATCC BAA-968 / K-10) (Mycobacterium paratuberculosis).